The primary structure comprises 292 residues: 4-hydroxy-tetrahydrodipicolinate synthase (292 aa).

Thr-45 serves as a coordination point for pyruvate. The active-site Proton donor/acceptor is the Tyr-133. Lys-161 (schiff-base intermediate with substrate) is an active-site residue. Ile-203 lines the pyruvate pocket.

This sequence belongs to the DapA family. Homodimer.

The protein resides in the cytoplasm. The catalysed reaction is L-aspartate 4-semialdehyde + pyruvate = (2S,4S)-4-hydroxy-2,3,4,5-tetrahydrodipicolinate + H2O + H(+). It functions in the pathway amino-acid biosynthesis; L-lysine biosynthesis via DAP pathway; (S)-tetrahydrodipicolinate from L-aspartate: step 3/4. Functionally, catalyzes the condensation of (S)-aspartate-beta-semialdehyde [(S)-ASA] and pyruvate to 4-hydroxy-tetrahydrodipicolinate (HTPA). The sequence is that of 4-hydroxy-tetrahydrodipicolinate synthase from Pseudomonas aeruginosa (strain ATCC 15692 / DSM 22644 / CIP 104116 / JCM 14847 / LMG 12228 / 1C / PRS 101 / PAO1).